A 284-amino-acid polypeptide reads, in one-letter code: NAD kinase (284 aa).

Catalysis depends on Asp70, which acts as the Proton acceptor. Residues 70 to 71, 139 to 140, Lys167, Asp169, Leu177, 180 to 185, and Gln236 each bind NAD(+); these read DG, NE, and TAYNLS.

Belongs to the NAD kinase family. A divalent metal cation is required as a cofactor.

It localises to the cytoplasm. The catalysed reaction is NAD(+) + ATP = ADP + NADP(+) + H(+). Its function is as follows. Involved in the regulation of the intracellular balance of NAD and NADP, and is a key enzyme in the biosynthesis of NADP. Catalyzes specifically the phosphorylation on 2'-hydroxyl of the adenosine moiety of NAD to yield NADP. This is NAD kinase from Helicobacter pylori (strain HPAG1).